A 235-amino-acid polypeptide reads, in one-letter code: dITP/XTP pyrophosphatase (235 aa).

Position 7-12 (7-12) interacts with substrate; it reads STNPGK. The active-site Proton acceptor is Asp-70. Asp-70 is a binding site for Mg(2+). Substrate-binding positions include Ser-71, 180-183, Lys-211, and 216-217; these read FGYD and HR.

Belongs to the HAM1 NTPase family. As to quaternary structure, homodimer. The cofactor is Mg(2+).

The catalysed reaction is XTP + H2O = XMP + diphosphate + H(+). It catalyses the reaction dITP + H2O = dIMP + diphosphate + H(+). It carries out the reaction ITP + H2O = IMP + diphosphate + H(+). In terms of biological role, pyrophosphatase that catalyzes the hydrolysis of nucleoside triphosphates to their monophosphate derivatives, with a high preference for the non-canonical purine nucleotides XTP (xanthosine triphosphate), dITP (deoxyinosine triphosphate) and ITP. Seems to function as a house-cleaning enzyme that removes non-canonical purine nucleotides from the nucleotide pool, thus preventing their incorporation into DNA/RNA and avoiding chromosomal lesions. This chain is dITP/XTP pyrophosphatase, found in Anaeromyxobacter dehalogenans (strain 2CP-C).